The sequence spans 150 residues: Protein Turandot X1/X2 (150 aa).

Residues 1–22 (MRLYIGSLLICVLLGIVPFATA) form the signal peptide. The disordered stretch occupies residues 127-150 (REEGQSNHANSPTTSPSRIQKMTK). The span at 132–150 (SNHANSPTTSPSRIQKMTK) shows a compositional bias: polar residues.

The protein belongs to the Turandot family.

Its subcellular location is the secreted. In terms of biological role, a humoral factor that may play a role in stress tolerance. This chain is Protein Turandot X1/X2, found in Drosophila sechellia (Fruit fly).